Reading from the N-terminus, the 98-residue chain is SPbeta prophage-derived uncharacterized protein YorB (98 aa).

This Bacillus subtilis (strain 168) protein is SPbeta prophage-derived uncharacterized protein YorB (yorB).